The primary structure comprises 419 residues: MRKIVINGGLPLQGEITISGAKNSVVALIPAIILADDVVTLDCVPDISDVASLVEIMELMGATVKRYDDVLEIDPRGVQNIPMPYGKINSLRASYYFYGSLLGRFGEATVGLPGGCDLGPRPIDLHLKAFEAMGATASYEGDNMKLSAKDTGLHGASIYMDTVSVGATINTMIAAVKANGRTIIENAAREPEIIDVATLLNNMGAHIRGAGTNIIIIDGVERLHGTRHQVIPDRIEAGTYISLAAAVGKGIRINNVLYEHLEGFIAKLEEMGVRMTVSEDSIFVEEQSNLKAINIKTAPYPGFATDLQQPLTPLLLRANGRGTIVDTIYEKRVNHVFELAKMDADISTTNGHILYTGGRDLRGASVKATDLRAGAALVIAGLMAEGKTEITNIEFILRGYSDIIEKLRNLGADIRLVED.

Residue 22–23 (KN) participates in phosphoenolpyruvate binding. Residue R92 participates in UDP-N-acetyl-alpha-D-glucosamine binding. C116 functions as the Proton donor in the catalytic mechanism. 2-(S-cysteinyl)pyruvic acid O-phosphothioketal is present on C116. UDP-N-acetyl-alpha-D-glucosamine is bound by residues 121-125 (RPIDL), D306, and I328.

The protein belongs to the EPSP synthase family. MurA subfamily.

The protein resides in the cytoplasm. The enzyme catalyses phosphoenolpyruvate + UDP-N-acetyl-alpha-D-glucosamine = UDP-N-acetyl-3-O-(1-carboxyvinyl)-alpha-D-glucosamine + phosphate. Its pathway is cell wall biogenesis; peptidoglycan biosynthesis. Functionally, cell wall formation. Adds enolpyruvyl to UDP-N-acetylglucosamine. Target for the antibiotic fosfomycin. Involved in heteroresistance to antibiotic fosfomycin. Heteroresistance is the ability of a clonal population to grow one or several subpopulations at a frequency of 10(-7) to 10(-3) in the presence of a higher antibiotic concentration than that predicted to be effective by measurement of the minimum inhibitory concentration (MIC). This Streptococcus pneumoniae serotype 2 (strain D39 / NCTC 7466) protein is UDP-N-acetylglucosamine 1-carboxyvinyltransferase.